The primary structure comprises 318 residues: dTDP-6-deoxy-L-talose 4-dehydrogenase (NAD(P)(+)) (318 aa).

NAD(+)-binding positions include phenylalanine 19–isoleucine 20, aspartate 60–proline 61, asparagine 95, threonine 120, tyrosine 145, and lysine 149. Substrate-binding residues include threonine 120 and tyrosine 145. The Proton acceptor role is filled by tyrosine 145.

Belongs to the NAD(P)-dependent epimerase/dehydratase family.

It catalyses the reaction dTDP-6-deoxy-beta-L-talose + NAD(+) = dTDP-4-dehydro-beta-L-rhamnose + NADH + H(+). It carries out the reaction dTDP-6-deoxy-beta-L-talose + NADP(+) = dTDP-4-dehydro-beta-L-rhamnose + NADPH + H(+). In terms of biological role, catalyzes the reduction of dTDP-6-deoxy-L-lyxo-4-hexulose to dTDP-6-deoxy-L-talose. Can use NAD(+) or NADP(+). The protein is dTDP-6-deoxy-L-talose 4-dehydrogenase (NAD(P)(+)) (tal) of Kitasatospora kifunensis (Streptomyces kifunensis).